The chain runs to 152 residues: Superoxide dismutase [Cu-Zn] (152 aa).

Cu cation is bound by residues histidine 45, histidine 47, and histidine 62. Cysteine 56 and cysteine 145 are joined by a disulfide. The Zn(2+) site is built by histidine 62, histidine 70, histidine 79, and aspartate 82. Histidine 119 contributes to the Cu cation binding site.

Belongs to the Cu-Zn superoxide dismutase family. As to quaternary structure, homodimer. It depends on Cu cation as a cofactor. Zn(2+) is required as a cofactor.

Its subcellular location is the cytoplasm. It catalyses the reaction 2 superoxide + 2 H(+) = H2O2 + O2. Functionally, destroys radicals which are normally produced within the cells and which are toxic to biological systems. This is Superoxide dismutase [Cu-Zn] (SODCC) from Paulownia kawakamii (Dragon tree).